Reading from the N-terminus, the 337-residue chain is Nicotinate-nucleotide--dimethylbenzimidazole phosphoribosyltransferase (337 aa).

Glutamate 305 acts as the Proton acceptor in catalysis.

The protein belongs to the CobT family.

The catalysed reaction is 5,6-dimethylbenzimidazole + nicotinate beta-D-ribonucleotide = alpha-ribazole 5'-phosphate + nicotinate + H(+). It participates in nucleoside biosynthesis; alpha-ribazole biosynthesis; alpha-ribazole from 5,6-dimethylbenzimidazole: step 1/2. Catalyzes the synthesis of alpha-ribazole-5'-phosphate from nicotinate mononucleotide (NAMN) and 5,6-dimethylbenzimidazole (DMB). This chain is Nicotinate-nucleotide--dimethylbenzimidazole phosphoribosyltransferase, found in Roseobacter denitrificans (strain ATCC 33942 / OCh 114) (Erythrobacter sp. (strain OCh 114)).